Reading from the N-terminus, the 175-residue chain is Crossover junction endodeoxyribonuclease RuvC (175 aa).

Catalysis depends on residues aspartate 8, glutamate 68, and aspartate 140. Mg(2+)-binding residues include aspartate 8, glutamate 68, and aspartate 140.

Belongs to the RuvC family. As to quaternary structure, homodimer which binds Holliday junction (HJ) DNA. The HJ becomes 2-fold symmetrical on binding to RuvC with unstacked arms; it has a different conformation from HJ DNA in complex with RuvA. In the full resolvosome a probable DNA-RuvA(4)-RuvB(12)-RuvC(2) complex forms which resolves the HJ. The cofactor is Mg(2+).

It localises to the cytoplasm. It catalyses the reaction Endonucleolytic cleavage at a junction such as a reciprocal single-stranded crossover between two homologous DNA duplexes (Holliday junction).. The RuvA-RuvB-RuvC complex processes Holliday junction (HJ) DNA during genetic recombination and DNA repair. Endonuclease that resolves HJ intermediates. Cleaves cruciform DNA by making single-stranded nicks across the HJ at symmetrical positions within the homologous arms, yielding a 5'-phosphate and a 3'-hydroxyl group; requires a central core of homology in the junction. The consensus cleavage sequence is 5'-(A/T)TT(C/G)-3'. Cleavage occurs on the 3'-side of the TT dinucleotide at the point of strand exchange. HJ branch migration catalyzed by RuvA-RuvB allows RuvC to scan DNA until it finds its consensus sequence, where it cleaves and resolves the cruciform DNA. The polypeptide is Crossover junction endodeoxyribonuclease RuvC (Pseudomonas fluorescens (strain Pf0-1)).